The following is a 550-amino-acid chain: Nucleoside hydrolase 4 (550 aa).

The protein belongs to the IUNH family.

It is found in the cytoplasm. In terms of biological role, may be involved in the degradation of nucleosides. In Arabidopsis thaliana (Mouse-ear cress), this protein is Nucleoside hydrolase 4.